A 380-amino-acid polypeptide reads, in one-letter code: Nucleoporin Nup43 (380 aa).

Met1 carries the N-acetylmethionine modification. WD repeat units follow at residues 8–57 (FVSQ…NLDS), 72–110 (RHHG…QTLS), 127–166 (PSYS…AVRT), 170–208 (ADSS…NEPS), 215–255 (GDRV…MPVS), and 259–299 (AHEA…PEKS).

As to quaternary structure, component of the Nup107-160 subcomplex of the nuclear pore complex (NPC). The Nup107-160 subcomplex includes NUP160, NUP133, NUP107, NUP98, NUP85, NUP43, NUP37, SEH1 and SEC13.

The protein localises to the chromosome. The protein resides in the centromere. It is found in the kinetochore. It localises to the nucleus. Its subcellular location is the nuclear pore complex. Component of the Nup107-160 subcomplex of the nuclear pore complex (NPC). The Nup107-160 subcomplex is required for the assembly of a functional NPC. The Nup107-160 subcomplex is also required for normal kinetochore microtubule attachment, mitotic progression and chromosome segregation. The chain is Nucleoporin Nup43 (NUP43) from Homo sapiens (Human).